The primary structure comprises 77 residues: UPF0291 protein EAT1b_0405 (77 aa).

Residues 53–77 (KVVDPDGNDVTPEKLKEDQKRYRGE) form a disordered region. Basic and acidic residues predominate over residues 63–77 (TPEKLKEDQKRYRGE).

The protein belongs to the UPF0291 family.

Its subcellular location is the cytoplasm. This is UPF0291 protein EAT1b_0405 from Exiguobacterium sp. (strain ATCC BAA-1283 / AT1b).